A 192-amino-acid polypeptide reads, in one-letter code: Imidazoleglycerol-phosphate dehydratase (192 aa).

The protein belongs to the imidazoleglycerol-phosphate dehydratase family.

It is found in the cytoplasm. It carries out the reaction D-erythro-1-(imidazol-4-yl)glycerol 3-phosphate = 3-(imidazol-4-yl)-2-oxopropyl phosphate + H2O. Its pathway is amino-acid biosynthesis; L-histidine biosynthesis; L-histidine from 5-phospho-alpha-D-ribose 1-diphosphate: step 6/9. The polypeptide is Imidazoleglycerol-phosphate dehydratase (Staphylococcus aureus (strain JH9)).